Reading from the N-terminus, the 247-residue chain is tRNA (guanine-N(1)-)-methyltransferase (247 aa).

S-adenosyl-L-methionine-binding positions include glycine 116 and 135–140 (IGDYVL).

It belongs to the RNA methyltransferase TrmD family. In terms of assembly, homodimer.

Its subcellular location is the cytoplasm. It carries out the reaction guanosine(37) in tRNA + S-adenosyl-L-methionine = N(1)-methylguanosine(37) in tRNA + S-adenosyl-L-homocysteine + H(+). In terms of biological role, specifically methylates guanosine-37 in various tRNAs. This chain is tRNA (guanine-N(1)-)-methyltransferase, found in Symbiobacterium thermophilum (strain DSM 24528 / JCM 14929 / IAM 14863 / T).